Reading from the N-terminus, the 356-residue chain is Probable arabinogalactan endo-beta-1,4-galactanase A (356 aa).

Positions 1–21 (MLGKTVLLPLLVLLCHSLASA) are cleaved as a signal peptide. The N-linked (GlcNAc...) asparagine glycan is linked to Asn-133. Glu-157 functions as the Proton donor in the catalytic mechanism. Glu-268 functions as the Nucleophile in the catalytic mechanism.

It belongs to the glycosyl hydrolase 53 family.

Its subcellular location is the secreted. It catalyses the reaction The enzyme specifically hydrolyzes (1-&gt;4)-beta-D-galactosidic linkages in type I arabinogalactans.. Its function is as follows. Endogalactanase involved in the degradation of plant cell wall polysaccharides, and more particularly of hairy regions of pectin. This Aspergillus fumigatus (strain ATCC MYA-4609 / CBS 101355 / FGSC A1100 / Af293) (Neosartorya fumigata) protein is Probable arabinogalactan endo-beta-1,4-galactanase A (galA).